The primary structure comprises 69 residues: Probable molybdenum-pterin-binding protein (69 aa).

In terms of domain architecture, Mop spans 2 to 68; that stretch reads KISARNQLKG…IKATSVMVGV (67 aa).

This sequence to C.pasteurianum MOP proteins.

Binds one mole of molybdenum per mole of protein and contains a pterin. The protein is Probable molybdenum-pterin-binding protein of Haemophilus influenzae (strain ATCC 51907 / DSM 11121 / KW20 / Rd).